A 367-amino-acid chain; its full sequence is Probable thylakoidal processing peptidase 2, chloroplastic (367 aa).

The N-terminal 68 residues, 1–68 (MAIRVTFTYS…NTWGPSSGPR (68 aa)), are a transit peptide targeting the chloroplast. The segment at 53-72 (DKSPGSNTWGPSSGPRARPA) is disordered. Residues 62 to 72 (GPSSGPRARPA) are compositionally biased toward low complexity. Residues 185–205 (EDAKAAFTAVTVSLLFRSALA) form a helical membrane-spanning segment. At 206–367 (EPKSIPSTSM…VSQKRAVDVS (162 aa)) the chain is on the lumenal, thylakoid side. Serine 214 is an active-site residue.

The protein belongs to the peptidase S26 family.

The protein resides in the plastid. It is found in the chloroplast thylakoid membrane. It catalyses the reaction Cleavage of hydrophobic, N-terminal signal or leader sequences from secreted and periplasmic proteins.. Cleaves the thylakoid-transfer domain from a chloroplast protein. This chain is Probable thylakoidal processing peptidase 2, chloroplastic (TPP2), found in Arabidopsis thaliana (Mouse-ear cress).